We begin with the raw amino-acid sequence, 428 residues long: CinA-like protein (428 aa).

This sequence belongs to the CinA family.

The chain is CinA-like protein from Chlorobium phaeovibrioides (strain DSM 265 / 1930) (Prosthecochloris vibrioformis (strain DSM 265)).